Consider the following 882-residue polypeptide: Holliday junction resolvase MOC1, chloroplastic (882 aa).

2 disordered regions span residues 87–148 (IRDG…QTPT) and 323–351 (TPAA…PRAA). Residues 91-111 (PNSNSRCSTVRTHATRSKSTG) show a composition bias toward polar residues. Positions 112–125 (PSRATSSGPATAAP) are enriched in low complexity. The segment covering 134 to 148 (NDTQDGGLTSEQTPT) has biased composition (polar residues). The segment covering 323–337 (TPAAASQTPPTTVTS) has biased composition (low complexity). Residues aspartate 397, glutamate 552, asparagine 629, and aspartate 634 each contribute to the Mg(2+) site. Residues 710-882 (KVERKAQARS…DGGVSGSESE (173 aa)) form a disordered region. Over residues 732–743 (EEPEAQAEEEQA) the composition is skewed to acidic residues. Composition is skewed to low complexity over residues 744–758 (EAGT…GAAA), 769–783 (VESG…VAAG), 810–819 (SGKSSSKAEA), and 830–844 (ASVG…SVGS). Gly residues-rich tracts occupy residues 845-857 (SSGG…GGVK) and 868-882 (AKAG…SESE).

The cofactor is Mg(2+). It depends on Mn(2+) as a cofactor.

The protein localises to the plastid. Its subcellular location is the chloroplast. The enzyme catalyses Endonucleolytic cleavage at a junction such as a reciprocal single-stranded crossover between two homologous DNA duplexes (Holliday junction).. Its function is as follows. A structure-specific endonuclease that resolves Holliday junction (HJ) intermediates during genetic recombination. Cleaves 4-way DNA junctions introducing paired nicks in opposing strands, leaving a 5'-terminal phosphate and a 3'-terminal hydroxyl group that are ligated to produce recombinant products. Mediates chloroplast nucleoid segregation during chloroplast division. This is Holliday junction resolvase MOC1, chloroplastic from Chlamydomonas reinhardtii (Chlamydomonas smithii).